The primary structure comprises 290 residues: Ribosomal RNA small subunit methyltransferase A (290 aa).

S-adenosyl-L-methionine is bound by residues Asn-27, Leu-29, Gly-54, Glu-75, Asp-100, and Asn-125.

Belongs to the class I-like SAM-binding methyltransferase superfamily. rRNA adenine N(6)-methyltransferase family. RsmA subfamily.

It localises to the cytoplasm. The enzyme catalyses adenosine(1518)/adenosine(1519) in 16S rRNA + 4 S-adenosyl-L-methionine = N(6)-dimethyladenosine(1518)/N(6)-dimethyladenosine(1519) in 16S rRNA + 4 S-adenosyl-L-homocysteine + 4 H(+). Its function is as follows. Specifically dimethylates two adjacent adenosines (A1518 and A1519) in the loop of a conserved hairpin near the 3'-end of 16S rRNA in the 30S particle. May play a critical role in biogenesis of 30S subunits. This chain is Ribosomal RNA small subunit methyltransferase A, found in Streptococcus pneumoniae (strain Hungary19A-6).